The chain runs to 206 residues: Superoxide dismutase [Mn] (206 aa).

Residues histidine 27, histidine 82, aspartate 168, and histidine 172 each coordinate Mn(2+).

This sequence belongs to the iron/manganese superoxide dismutase family. Mn(2+) serves as cofactor.

It catalyses the reaction 2 superoxide + 2 H(+) = H2O2 + O2. In terms of biological role, destroys superoxide anion radicals which are normally produced within the cells and which are toxic to biological systems. The protein is Superoxide dismutase [Mn] (sodA) of Lactococcus lactis subsp. lactis (strain IL1403) (Streptococcus lactis).